The chain runs to 153 residues: 6,7-dimethyl-8-ribityllumazine synthase 1 (153 aa).

5-amino-6-(D-ribitylamino)uracil contacts are provided by residues Phe-16, 47–49 (ALE), and 76–78 (MVI). Position 81 to 82 (81 to 82 (ET)) interacts with (2S)-2-hydroxy-3-oxobutyl phosphate. Catalysis depends on His-84, which acts as the Proton donor. Residue Asn-109 coordinates 5-amino-6-(D-ribitylamino)uracil. Arg-123 is a (2S)-2-hydroxy-3-oxobutyl phosphate binding site.

The protein belongs to the DMRL synthase family.

The enzyme catalyses (2S)-2-hydroxy-3-oxobutyl phosphate + 5-amino-6-(D-ribitylamino)uracil = 6,7-dimethyl-8-(1-D-ribityl)lumazine + phosphate + 2 H2O + H(+). It functions in the pathway cofactor biosynthesis; riboflavin biosynthesis; riboflavin from 2-hydroxy-3-oxobutyl phosphate and 5-amino-6-(D-ribitylamino)uracil: step 1/2. Functionally, catalyzes the formation of 6,7-dimethyl-8-ribityllumazine by condensation of 5-amino-6-(D-ribitylamino)uracil with 3,4-dihydroxy-2-butanone 4-phosphate. This is the penultimate step in the biosynthesis of riboflavin. The sequence is that of 6,7-dimethyl-8-ribityllumazine synthase 1 from Rhizobium meliloti (strain 1021) (Ensifer meliloti).